An 873-amino-acid chain; its full sequence is Bifunctional uridylyltransferase/uridylyl-removing enzyme (873 aa).

The uridylyltransferase stretch occupies residues 1–332; sequence MKYLSPLSLS…HQGEQDDAII (332 aa). Residues 333–692 are uridylyl-removing; the sequence is IDDDFQRRGR…ISKNASRGGT (360 aa). The HD domain occupies 451–573; it reads VDEHSIRLLK…VRDEERLDYL (123 aa). ACT domains follow at residues 693–777 and 800–873; these read EIFV…RPPR and LMEF…RLSS.

Belongs to the GlnD family. Requires Mg(2+) as cofactor.

The catalysed reaction is [protein-PII]-L-tyrosine + UTP = [protein-PII]-uridylyl-L-tyrosine + diphosphate. It carries out the reaction [protein-PII]-uridylyl-L-tyrosine + H2O = [protein-PII]-L-tyrosine + UMP + H(+). With respect to regulation, uridylyltransferase (UTase) activity is inhibited by glutamine, while glutamine activates uridylyl-removing (UR) activity. Functionally, modifies, by uridylylation and deuridylylation, the PII regulatory proteins (GlnB and homologs), in response to the nitrogen status of the cell that GlnD senses through the glutamine level. Under low glutamine levels, catalyzes the conversion of the PII proteins and UTP to PII-UMP and PPi, while under higher glutamine levels, GlnD hydrolyzes PII-UMP to PII and UMP (deuridylylation). Thus, controls uridylylation state and activity of the PII proteins, and plays an important role in the regulation of nitrogen assimilation and metabolism. This Aliivibrio fischeri (strain MJ11) (Vibrio fischeri) protein is Bifunctional uridylyltransferase/uridylyl-removing enzyme.